The sequence spans 218 residues: Zinc metalloproteinase-disintegrin-like bothrojarin-2 (218 aa).

A Disintegrin domain is found at Pro-14–Asn-100. The Ca(2+) site is built by Val-16, Leu-21, Glu-23, Glu-26, and Asp-29. 10 disulfide bridges follow: Cys-28/Cys-46, Cys-30/Cys-41, Cys-40/Cys-63, Cys-54/Cys-60, Cys-59/Cys-85, Cys-72/Cys-92, Cys-79/Cys-111, Cys-104/Cys-116, Cys-123/Cys-173, and Cys-151/Cys-161. A D/ECD-tripeptide motif is present at residues Glu-78–Asp-80.

It belongs to the venom metalloproteinase (M12B) family. P-III subfamily. P-IIIa sub-subfamily. As to quaternary structure, monomer. It depends on Zn(2+) as a cofactor. Post-translationally, glycosylated. In terms of tissue distribution, expressed by the venom gland.

The protein localises to the secreted. Its function is as follows. The hemorrhagic metalloproteinase-disintegrin-like bothrojarin-1 is a potent inhibitor of collagen-induced platelet aggregation by blockage of alpha-2/beta-1 (ITGA2/ITGB1) integrin. It does not present any fibrinogen-clotting activity. This is Zinc metalloproteinase-disintegrin-like bothrojarin-2 from Bothrops jararaca (Jararaca).